The primary structure comprises 95 residues: Small ribosomal subunit protein bS6 (95 aa).

It belongs to the bacterial ribosomal protein bS6 family.

In terms of biological role, binds together with bS18 to 16S ribosomal RNA. The sequence is that of Small ribosomal subunit protein bS6 from Onion yellows phytoplasma (strain OY-M).